The following is a 529-amino-acid chain: uncharacterized protein (529 aa).

The segment covering 1–11 has biased composition (basic and acidic residues); the sequence is MSSSKIKELRE. Disordered stretches follow at residues 1–222, 237–256, 271–372, and 393–488; these read MSSS…IPYS, PFLE…EENV, AFLQ…TAAP, and GSGN…PSFT. Polar residues predominate over residues 27-40; that stretch reads MQQNQPRPATTTPP. The span at 83–95 shows a compositional bias: basic residues; sequence TKGRAHPRSRRPP. The span at 110–125 shows a compositional bias: polar residues; the sequence is NTGSTKAADTKSSVEA. Serine 128 is subject to Phosphoserine. Polar residues predominate over residues 170-199; the sequence is TTKAVEATTSKASSAHTDTLATSASNSDRG. Serine 217 bears the Phosphoserine mark. Over residues 237–249 the composition is skewed to polar residues; the sequence is PFLESKVLPQNNE. Over residues 321–334 the composition is skewed to low complexity; the sequence is SSPLSFSASKSPAA. Residues 336-362 are compositionally biased toward polar residues; that stretch reads DSSTKTPTEQVNVVSKQAPTTSSTSVI. A compositionally biased stretch (basic and acidic residues) spans 409 to 426; the sequence is ERTKSLSKESPVEPEKPA. Residues 430–455 are compositionally biased toward polar residues; the sequence is ATSSSTPTTENKESWTNQGIKSSQQR. Over residues 456–470 the composition is skewed to low complexity; sequence SANASPATSPSNQAS. Polar residues predominate over residues 471–488; it reads IHASFTKESSTHSSPSFT.

The protein resides in the cytoplasm. This is an uncharacterized protein from Schizosaccharomyces pombe (strain 972 / ATCC 24843) (Fission yeast).